Consider the following 146-residue polypeptide: Anti-sigma F factor (146 aa).

This sequence belongs to the anti-sigma-factor family.

It catalyses the reaction L-seryl-[protein] + ATP = O-phospho-L-seryl-[protein] + ADP + H(+). The catalysed reaction is L-threonyl-[protein] + ATP = O-phospho-L-threonyl-[protein] + ADP + H(+). Functionally, binds to sigma F and blocks its ability to form an RNA polymerase holoenzyme (E-sigma F). Phosphorylates SpoIIAA on a serine residue. This phosphorylation may enable SpoIIAA to act as an anti-anti-sigma factor that counteracts SpoIIAB and thus releases sigma F from inhibition. This is Anti-sigma F factor from Bacillus licheniformis.